A 559-amino-acid chain; its full sequence is Cytoplasmic polyadenylation element-binding protein 1 (559 aa).

Positions 223–244 (RLDHSSSPLTPPPSATSSGGLS) are disordered. 2 consecutive RRM domains span residues 304–401 (CKVF…DAQV) and 423–504 (NTVF…PYLE). Zn(2+) is bound by residues Cys-508, Cys-511, Cys-520, Cys-525, Cys-530, Cys-533, His-538, and His-546.

Belongs to the RRM CPEB family. As to quaternary structure, interacts with kinesin, dynein, APLP1, APLP2, TENT2/GLD2 and APP. Both phosphorylated and non phosphorylated forms interact with APLP1. Interacts with TENT4B; the interaction is required for TENT4B-mediated translational control.

The protein resides in the cytoplasm. Sequence-specific RNA-binding protein that regulates mRNA cytoplasmic polyadenylation and translation initiation during oocyte maturation and early development. Binds to the cytoplasmic polyadenylation element (CPE), an uridine-rich sequence element (consensus sequence 5'-UUUUUAU-3') within the mRNA 3'-UTR. The sequence is that of Cytoplasmic polyadenylation element-binding protein 1 (cpeb1) from Carassius auratus (Goldfish).